The following is a 310-amino-acid chain: MKQHILWDLNNYINQDYTLPKINCTFDIKTNINSSVKEDQEKWILEFFGNSIEKSKKYLGQQTFLIYMFSFPFASPDELKCIFKIMDWAFIIDDFYFESKAKGMSYLEKLFKTNKDKSKDKFIKLFWEIINEYKQIGKKDSIDVLINEIYSWAKSAVQCSKNDQISSNSTLAEYMESRYYDIGIIMALASSTTLISIPKEIRESKIFKQLEYWFVVCNTLINDCYSFNKEKNEPVLTNYVKIKTLQCGSIQTSLDFVAETIENSLTEINNHSNQLIQQYPNNINLKQYIKSLKYLTSGHLHVSSICNRYK.

A DDxx(x)D/E motif motif is present at residues 93–98 (DDFYFE). Residues 222-230 (NDCYSFNKE) carry the NDxxSxxxD/E motif motif.

It belongs to the terpene synthase family.

It catalyses the reaction (2E,6E)-farnesyl diphosphate = (E)-beta-farnesene + diphosphate. The catalysed reaction is (2E,6E)-farnesyl diphosphate = (1S,2S,4R)-beta-elemene + diphosphate. It carries out the reaction (2E,6E)-farnesyl diphosphate = (3E,6E)-alpha-farnesene + diphosphate. Functionally, terpene synthase that converts its substrate farnesyl diphosphate (FPP) into the sesquiterpenes beta-elemene, (E)-beta-farnesene and (E,E)-alpha-farnesene. This chain is Terpene synthase 6, found in Dictyostelium purpureum (Slime mold).